Here is a 433-residue protein sequence, read N- to C-terminus: Trigger factor (433 aa).

The PPIase FKBP-type domain occupies 163–248 (GDTVNIDFSG…VNEIKFKEVP (86 aa)).

This sequence belongs to the FKBP-type PPIase family. Tig subfamily.

The protein localises to the cytoplasm. The enzyme catalyses [protein]-peptidylproline (omega=180) = [protein]-peptidylproline (omega=0). Its function is as follows. Involved in protein export. Acts as a chaperone by maintaining the newly synthesized protein in an open conformation. Functions as a peptidyl-prolyl cis-trans isomerase. The chain is Trigger factor from Staphylococcus aureus (strain COL).